A 418-amino-acid chain; its full sequence is Putative ion-transport protein YfeO (418 aa).

12 consecutive transmembrane segments (helical) span residues 10 to 30 (LLLS…LIVV), 54 to 74 (DSPL…GLVI), 99 to 119 (ALPG…SLGP), 120 to 140 (EHPI…RLLP), 149 to 169 (ILAS…AALI), 186 to 206 (LFAP…FFHP), 223 to 243 (ILSG…AVWC), 258 to 278 (VLVL…GGPV), 300 to 320 (DYFL…ASGF), 322 to 342 (GGRI…LHEH), 343 to 363 (VPAV…VLVV), and 371 to 391 (LFMA…CIVM).

This sequence belongs to the chloride channel (TC 2.A.49) family.

Its subcellular location is the cell membrane. The sequence is that of Putative ion-transport protein YfeO from Escherichia coli (strain 55989 / EAEC).